Reading from the N-terminus, the 133-residue chain is Ribonuclease P protein component (133 aa).

It belongs to the RnpA family. In terms of assembly, consists of a catalytic RNA component (M1 or rnpB) and a protein subunit.

The enzyme catalyses Endonucleolytic cleavage of RNA, removing 5'-extranucleotides from tRNA precursor.. RNaseP catalyzes the removal of the 5'-leader sequence from pre-tRNA to produce the mature 5'-terminus. It can also cleave other RNA substrates such as 4.5S RNA. The protein component plays an auxiliary but essential role in vivo by binding to the 5'-leader sequence and broadening the substrate specificity of the ribozyme. This chain is Ribonuclease P protein component, found in Corynebacterium glutamicum (strain R).